Reading from the N-terminus, the 193-residue chain is MEPFRIHKGTAAVLMNDNIDTDQIIPKQYLKRIERTGFGKFLFDEWRYDNNRQENPNFPLNAPDRKGASILITGDNFGCGSSREHAPWALADYGFRVIIAGGFADIFYMNCMKNGMLPIVMDKEMREKLVKTDAREQIEVDLENEVITTSTHRFHFTIEKMWKEKLFNGLDEISITMQYEQEIKEYERRVATY.

The protein belongs to the LeuD family. LeuD type 1 subfamily. In terms of assembly, heterodimer of LeuC and LeuD.

The enzyme catalyses (2R,3S)-3-isopropylmalate = (2S)-2-isopropylmalate. It participates in amino-acid biosynthesis; L-leucine biosynthesis; L-leucine from 3-methyl-2-oxobutanoate: step 2/4. Its function is as follows. Catalyzes the isomerization between 2-isopropylmalate and 3-isopropylmalate, via the formation of 2-isopropylmaleate. This Bacillus cereus (strain 03BB102) protein is 3-isopropylmalate dehydratase small subunit.